Here is a 140-residue protein sequence, read N- to C-terminus: Transmembrane protein 107 (140 aa).

2 helical membrane passes run 7-27 (LVPSRFLTLLAHLVIVITLFW) and 53-73 (LVAALCLTLGLFAVELAGFLS). An N-linked (GlcNAc...) asparagine glycan is attached at N79. A run of 2 helical transmembrane segments spans residues 83–103 (SLLSIAAHCSASVALSFFIFE) and 113–133 (IFAFCSAFPAVTETALFIAVF).

Part of the tectonic-like complex (also named B9 complex). Interacts with TMEM237, TMEM231, MKS1 and TMEM216.

Its subcellular location is the membrane. It localises to the cell projection. The protein localises to the cilium. In terms of biological role, plays a role in cilia formation and embryonic patterning. Requires for normal Sonic hedgehog (Shh) signaling in the neural tube and acts in combination with GLI2 and GLI3 to pattern ventral and intermediate neuronal cell types. During ciliogenesis regulates the ciliary transition zone localization of some MKS complex proteins. The polypeptide is Transmembrane protein 107 (Rattus norvegicus (Rat)).